Here is a 100-residue protein sequence, read N- to C-terminus: Urease subunit gamma (100 aa).

It belongs to the urease gamma subunit family. Heterotrimer of UreA (gamma), UreB (beta) and UreC (alpha) subunits. Three heterotrimers associate to form the active enzyme.

The protein localises to the cytoplasm. The catalysed reaction is urea + 2 H2O + H(+) = hydrogencarbonate + 2 NH4(+). It participates in nitrogen metabolism; urea degradation; CO(2) and NH(3) from urea (urease route): step 1/1. This chain is Urease subunit gamma, found in Methylocella silvestris (strain DSM 15510 / CIP 108128 / LMG 27833 / NCIMB 13906 / BL2).